Here is a 404-residue protein sequence, read N- to C-terminus: Exodeoxyribonuclease 7 large subunit (404 aa).

It belongs to the XseA family. Heterooligomer composed of large and small subunits.

It is found in the cytoplasm. The catalysed reaction is Exonucleolytic cleavage in either 5'- to 3'- or 3'- to 5'-direction to yield nucleoside 5'-phosphates.. Bidirectionally degrades single-stranded DNA into large acid-insoluble oligonucleotides, which are then degraded further into small acid-soluble oligonucleotides. The protein is Exodeoxyribonuclease 7 large subunit of Mesoplasma florum (strain ATCC 33453 / NBRC 100688 / NCTC 11704 / L1) (Acholeplasma florum).